Reading from the N-terminus, the 366-residue chain is Histone-lysine N-methyltransferase SETD7 (366 aa).

MORN repeat units follow at residues 36 to 58, 59 to 81, and 106 to 128; these read FEGH…DGST, LEGF…DGGS, and FKGQ…DGGS. Residues 214-336 enclose the SET domain; sequence ERVYVNDSLI…KDEELTVAYG (123 aa). S-adenosyl-L-methionine is bound by residues 226–228, asparagine 296, and histidine 297; that span reads AGE.

It belongs to the class V-like SAM-binding methyltransferase superfamily. Histone-lysine methyltransferase family. SET7 subfamily.

The protein localises to the nucleus. It is found in the chromosome. The catalysed reaction is L-lysyl(4)-[histone H3] + S-adenosyl-L-methionine = N(6)-methyl-L-lysyl(4)-[histone H3] + S-adenosyl-L-homocysteine + H(+). The enzyme catalyses L-lysyl-[protein] + S-adenosyl-L-methionine = N(6)-methyl-L-lysyl-[protein] + S-adenosyl-L-homocysteine + H(+). Histone methyltransferase that specifically monomethylates 'Lys-4' of histone H3. H3 'Lys-4' methylation represents a specific tag for epigenetic transcriptional activation. Plays a central role in the transcriptional activation of genes. Also has methyltransferase activity toward non-histone proteins. The chain is Histone-lysine N-methyltransferase SETD7 (setd7) from Xenopus tropicalis (Western clawed frog).